Here is a 254-residue protein sequence, read N- to C-terminus: tRNA threonylcarbamoyladenosine dehydratase (254 aa).

It belongs to the HesA/MoeB/ThiF family.

In terms of biological role, catalyzes the ATP-dependent dehydration of threonylcarbamoyladenosine at position 37 (t(6)A37) to form cyclic t(6)A37 (ct(6)A37) in tRNAs that read codons beginning with adenine. The chain is tRNA threonylcarbamoyladenosine dehydratase (tcdA) from Bacillus subtilis (strain 168).